The primary structure comprises 194 residues: Small ribosomal subunit protein uS4c (194 aa).

The tract at residues 1–29 (RFKKIRRLGTLPGLTSKRPRSGSDLKNPL) is disordered. Positions 82 to 143 (MRLDNILFRL…KQRSKALIQN (62 aa)) constitute an S4 RNA-binding domain.

Belongs to the universal ribosomal protein uS4 family. Part of the 30S ribosomal subunit. Contacts protein S5. The interaction surface between S4 and S5 is involved in control of translational fidelity.

It localises to the plastid. It is found in the chloroplast. Its function is as follows. One of the primary rRNA binding proteins, it binds directly to 16S rRNA where it nucleates assembly of the body of the 30S subunit. With S5 and S12 plays an important role in translational accuracy. The protein is Small ribosomal subunit protein uS4c (rps4) of Furcraea foetida (Mauritius hemp).